The chain runs to 182 residues: Nucleoside triphosphate/diphosphate phosphatase (182 aa).

Arg-27 (proton donor) is an active-site residue. Mg(2+)-binding residues include Asn-91, Asp-107, Asp-109, Asp-111, Asp-124, and Glu-127.

Belongs to the Ntdp family. The cofactor is Mg(2+).

It catalyses the reaction a ribonucleoside 5'-triphosphate + H2O = a ribonucleoside 5'-diphosphate + phosphate + H(+). The enzyme catalyses a ribonucleoside 5'-diphosphate + H2O = a ribonucleoside 5'-phosphate + phosphate + H(+). Its function is as follows. Has nucleoside phosphatase activity towards nucleoside triphosphates and nucleoside diphosphates. This Lactiplantibacillus plantarum (strain ATCC BAA-793 / NCIMB 8826 / WCFS1) (Lactobacillus plantarum) protein is Nucleoside triphosphate/diphosphate phosphatase.